The following is a 117-amino-acid chain: Minor capsid protein VP2 (117 aa).

Belongs to the lagovirus VP2 protein family. Homooligomer. The portal-like structure consists in 12 copies of VP2. Interacts with capsid protein VP1.

The protein resides in the virion. Its subcellular location is the host cytoplasm. Its function is as follows. Minor structural protein that forms a portal-like structure at a unique three-fold axis of symmetry, following binding to the host receptor. The channel formed by VP2 may allow the delivery of the viral genome through the host endosomal membrane. The sequence is that of Minor capsid protein VP2 from Oryctolagus cuniculus (Rabbit).